A 60-amino-acid polypeptide reads, in one-letter code: Bacteriochlorophyll c-binding protein (60 aa).

M1 bears the N-formylmethionine mark. A bacteriochlorophyll c is bound at residue H25.

This sequence belongs to the BChl C/E-binding protein family.

Its subcellular location is the chlorosome. It localises to the chlorosome envelope. Its function is as follows. Component of the photosynthetic apparatus. The light harvesting B740 complex binds bacteriochlorophyll c. The protein is Bacteriochlorophyll c-binding protein (csmA) of Pelodictyon luteolum.